Reading from the N-terminus, the 208-residue chain is 3-isopropylmalate dehydratase small subunit 2 (208 aa).

A disordered region spans residues 163–208; the sequence is EGERLDNASTSAGHGHAGTPLGDDPAKEDGPRPEQASGHQKEEHHA.

Belongs to the LeuD family. LeuD type 2 subfamily. As to quaternary structure, heterodimer of LeuC and LeuD.

It carries out the reaction (2R,3S)-3-isopropylmalate = (2S)-2-isopropylmalate. It functions in the pathway amino-acid biosynthesis; L-leucine biosynthesis; L-leucine from 3-methyl-2-oxobutanoate: step 2/4. In terms of biological role, catalyzes the isomerization between 2-isopropylmalate and 3-isopropylmalate, via the formation of 2-isopropylmaleate. The chain is 3-isopropylmalate dehydratase small subunit 2 (leuD2) from Deinococcus radiodurans (strain ATCC 13939 / DSM 20539 / JCM 16871 / CCUG 27074 / LMG 4051 / NBRC 15346 / NCIMB 9279 / VKM B-1422 / R1).